The chain runs to 144 residues: Large ribosomal subunit protein uL13 (144 aa).

This sequence belongs to the universal ribosomal protein uL13 family. Part of the 50S ribosomal subunit.

Its function is as follows. This protein is one of the early assembly proteins of the 50S ribosomal subunit, although it is not seen to bind rRNA by itself. It is important during the early stages of 50S assembly. The polypeptide is Large ribosomal subunit protein uL13 (Clostridium kluyveri (strain NBRC 12016)).